Reading from the N-terminus, the 566-residue chain is Autophagy-related protein 22-1 (566 aa).

Residues 38–58 traverse the membrane as a helical segment; that stretch reads YPIAAEVFAVVAVGAFLPVIL. An N-linked (GlcNAc...) asparagine glycan is attached at asparagine 103. Transmembrane regions (helical) follow at residues 110–130, 146–168, and 179–199; these read SFAMYTFSAAVIVQAVTLVCF, AFAYTGSVASALFIFISPTVYFL, and SLGCSFVLLNAFLPLLVANHA. N-linked (GlcNAc...) asparagine glycosylation occurs at asparagine 200. 8 helical membrane-spanning segments follow: residues 242–262, 278–298, 351–371, 382–402, 416–436, 451–471, 488–510, and 519–539; these read GYGYMAAVFVQVISILILWLF, VILLLVGMWWAALTTPTLLWL, FLISWFLLSDAVATISGTAVL, IAIALLSITSIGSGIIGAFAW, ILLCCVAGMEMIPLYGLLGFI, WEIYPVAVLHGIVMGGVSSYA, FALYAVTDKGSSAFGPALVGWLV, and AFIFLAVLVVLPAPLLWMLDV. A disordered region spans residues 547-566; it reads KAMADGEGRGRGTYERVREE.

It belongs to the ATG22 family.

The protein resides in the vacuole membrane. In terms of biological role, vacuolar effluxer which mediate the efflux of amino acids resulting from autophagic degradation. The release of autophagic amino acids allows the maintenance of protein synthesis and viability during nitrogen starvation. This is Autophagy-related protein 22-1 (ATG22-1) from Phaeosphaeria nodorum (strain SN15 / ATCC MYA-4574 / FGSC 10173) (Glume blotch fungus).